The sequence spans 337 residues: tRNA N6-adenosine threonylcarbamoyltransferase (337 aa).

Fe cation contacts are provided by histidine 111 and histidine 115. Residues leucine 134–glycine 138, aspartate 167, glycine 180, and asparagine 272 contribute to the substrate site. A Fe cation-binding site is contributed by aspartate 300.

The protein belongs to the KAE1 / TsaD family. Requires Fe(2+) as cofactor.

The protein resides in the cytoplasm. The enzyme catalyses L-threonylcarbamoyladenylate + adenosine(37) in tRNA = N(6)-L-threonylcarbamoyladenosine(37) in tRNA + AMP + H(+). Its function is as follows. Required for the formation of a threonylcarbamoyl group on adenosine at position 37 (t(6)A37) in tRNAs that read codons beginning with adenine. Is involved in the transfer of the threonylcarbamoyl moiety of threonylcarbamoyl-AMP (TC-AMP) to the N6 group of A37, together with TsaE and TsaB. TsaD likely plays a direct catalytic role in this reaction. This chain is tRNA N6-adenosine threonylcarbamoyltransferase, found in Photorhabdus laumondii subsp. laumondii (strain DSM 15139 / CIP 105565 / TT01) (Photorhabdus luminescens subsp. laumondii).